Here is a 374-residue protein sequence, read N- to C-terminus: tRNA N6-adenosine threonylcarbamoyltransferase (374 aa).

Histidine 117 and histidine 121 together coordinate Fe cation. Substrate contacts are provided by residues 140-144 (LVSGG), aspartate 174, glycine 187, aspartate 191, and asparagine 283. Aspartate 311 contacts Fe cation. The segment covering 337-352 (ADSSLPVTEPHVPGQG) has biased composition (low complexity). Residues 337–374 (ADSSLPVTEPHVPGQGHPHGHPHGHDHVHEVSKENLYS) are disordered. The segment covering 359-374 (HGHDHVHEVSKENLYS) has biased composition (basic and acidic residues).

The protein belongs to the KAE1 / TsaD family. Fe(2+) is required as a cofactor.

The protein localises to the cytoplasm. It carries out the reaction L-threonylcarbamoyladenylate + adenosine(37) in tRNA = N(6)-L-threonylcarbamoyladenosine(37) in tRNA + AMP + H(+). Functionally, required for the formation of a threonylcarbamoyl group on adenosine at position 37 (t(6)A37) in tRNAs that read codons beginning with adenine. Is involved in the transfer of the threonylcarbamoyl moiety of threonylcarbamoyl-AMP (TC-AMP) to the N6 group of A37, together with TsaE and TsaB. TsaD likely plays a direct catalytic role in this reaction. This is tRNA N6-adenosine threonylcarbamoyltransferase from Streptomyces coelicolor (strain ATCC BAA-471 / A3(2) / M145).